Reading from the N-terminus, the 234-residue chain is Phosphoglycolate phosphatase (234 aa).

The active-site Nucleophile is Asp-8. Mg(2+) is bound by residues Asp-8 and Asp-10. Substrate is bound at residue Lys-155. Mg(2+)-binding residues include Asp-178 and Asp-182.

It belongs to the archaeal SPP-like hydrolase family. The cofactor is Mg(2+).

The catalysed reaction is 2-phosphoglycolate + H2O = glycolate + phosphate. In terms of biological role, catalyzes the dephosphorylation of 2-phosphoglycolate. The sequence is that of Phosphoglycolate phosphatase from Thermococcus sibiricus (strain DSM 12597 / MM 739).